Here is a 260-residue protein sequence, read N- to C-terminus: 1-(5-phosphoribosyl)-5-[(5-phosphoribosylamino)methylideneamino] imidazole-4-carboxamide isomerase (260 aa).

D8 serves as the catalytic Proton acceptor. Residue D130 is the Proton donor of the active site.

It belongs to the HisA/HisF family.

Its subcellular location is the cytoplasm. It catalyses the reaction 1-(5-phospho-beta-D-ribosyl)-5-[(5-phospho-beta-D-ribosylamino)methylideneamino]imidazole-4-carboxamide = 5-[(5-phospho-1-deoxy-D-ribulos-1-ylimino)methylamino]-1-(5-phospho-beta-D-ribosyl)imidazole-4-carboxamide. It functions in the pathway amino-acid biosynthesis; L-histidine biosynthesis; L-histidine from 5-phospho-alpha-D-ribose 1-diphosphate: step 4/9. The polypeptide is 1-(5-phosphoribosyl)-5-[(5-phosphoribosylamino)methylideneamino] imidazole-4-carboxamide isomerase (Chlorobaculum parvum (strain DSM 263 / NCIMB 8327) (Chlorobium vibrioforme subsp. thiosulfatophilum)).